The chain runs to 143 residues: Large ribosomal subunit protein uL15 (143 aa).

Residues 1–51 (MRLNSIAPAPGSRPSAKRVGRGIGSGLGKTAGRGHKGQKARAGGYHKVGFE) are disordered. The span at 21 to 31 (RGIGSGLGKTA) shows a compositional bias: gly residues.

The protein belongs to the universal ribosomal protein uL15 family. In terms of assembly, part of the 50S ribosomal subunit.

In terms of biological role, binds to the 23S rRNA. The protein is Large ribosomal subunit protein uL15 of Thioalkalivibrio sulfidiphilus (strain HL-EbGR7).